Reading from the N-terminus, the 374-residue chain is Transcription termination factor 1, mitochondrial (374 aa).

Residues 1–37 constitute a mitochondrion transit peptide; sequence MASRNIWRVRRNFLFDLRGWVPQYSAEVFLKSIPFRP. Interaction with DNA stretches follow at residues 146–147, 224–228, 301–308, 332–335, and 361–368; these read RS, QSTKR, SEKKFNDK, SIHT, and SQRRYEAK.

This sequence belongs to the mTERF family. As to quaternary structure, monomer. Is a phosphoprotein. While the DNA-binding activity is unaffected by the phosphorylation/dephosphorylation state, only the phosphorylated form of the protein is active for termination activity. Functioning seems to be regulated by phosphorylation.

The protein localises to the mitochondrion. Functionally, transcription termination factor. Binds to a 28 bp region within the tRNA(Leu(uur)) gene at a position immediately adjacent to and downstream of the 16S rRNA gene; this region comprises a tridecamer sequence critical for directing accurate termination. Binds DNA along the major grove and promotes DNA bending and partial unwinding. Promotes base flipping. Transcription termination activity appears to be polarized with highest specificity for transcripts initiated on the light strand. The sequence is that of Transcription termination factor 1, mitochondrial (Mterf1) from Rattus norvegicus (Rat).